The sequence spans 329 residues: Gibberellin 2-beta-dioxygenase 1 (329 aa).

Residues Asn165–Pro273 form the Fe2OG dioxygenase domain. Positions 197, 199, and 254 each coordinate Fe cation. Arg264 is a catalytic residue. Arg264 contacts 2-oxoglutarate.

The protein belongs to the iron/ascorbate-dependent oxidoreductase family. GA2OX subfamily. It depends on Fe(2+) as a cofactor. As to expression, preferentially expressed in flowers, siliques, and upper stems. Not expressed in the apex.

The enzyme catalyses gibberellin A1 + 2-oxoglutarate + O2 = gibberellin A8 + succinate + CO2. It functions in the pathway plant hormone biosynthesis; gibberellin biosynthesis. Catalyzes the 2-beta-hydroxylation of several biologically active gibberellins, leading to the homeostatic regulation of their endogenous level. Catabolism of gibberellins (GAs) plays a central role in plant development. Converts GA9/GA20 to GA51/GA29 and GA4/GA1 to GA34/GA8. This Arabidopsis thaliana (Mouse-ear cress) protein is Gibberellin 2-beta-dioxygenase 1 (GA2OX1).